The sequence spans 177 residues: Protein SOB FIVE-LIKE 6 (177 aa).

An SOFL-A motif is present at residues 14 to 19; the sequence is SGWTMY. Disordered regions lie at residues 37–60 and 78–104; these read ETKQ…PYYC and KSKS…FNSS. The SOFL-B signature appears at 47 to 56; sequence SMVSDASSGP. Basic residues predominate over residues 79–90; sequence SKSKNKNKNKKK.

It belongs to the SOFL plant protein family. Expressed in seedlings, flowers and siliques. Barely detectable in roots and leaves.

The protein resides in the cytoplasm. Its subcellular location is the nucleus. Functionally, involved in cytokinin-mediated development. The chain is Protein SOB FIVE-LIKE 6 from Arabidopsis thaliana (Mouse-ear cress).